The primary structure comprises 450 residues: Ribosomal protein uS12 methylthiotransferase RimO (450 aa).

In terms of domain architecture, MTTase N-terminal spans 7 to 123; the sequence is QKVSMVSLGC…IAEILAEKSG (117 aa). Residues cysteine 16, cysteine 52, cysteine 86, cysteine 161, cysteine 165, and cysteine 168 each coordinate [4Fe-4S] cluster. The region spanning 147 to 377 is the Radical SAM core domain; the sequence is SSPAWFSYLK…MRIQARLSFK (231 aa). Positions 380–448 constitute a TRAM domain; the sequence is RELIGTTEQV…DYDLIGEIQE (69 aa).

Belongs to the methylthiotransferase family. RimO subfamily. It depends on [4Fe-4S] cluster as a cofactor.

Its subcellular location is the cytoplasm. It catalyses the reaction L-aspartate(89)-[ribosomal protein uS12]-hydrogen + (sulfur carrier)-SH + AH2 + 2 S-adenosyl-L-methionine = 3-methylsulfanyl-L-aspartate(89)-[ribosomal protein uS12]-hydrogen + (sulfur carrier)-H + 5'-deoxyadenosine + L-methionine + A + S-adenosyl-L-homocysteine + 2 H(+). Catalyzes the methylthiolation of an aspartic acid residue of ribosomal protein uS12. The polypeptide is Ribosomal protein uS12 methylthiotransferase RimO (Pelobacter propionicus (strain DSM 2379 / NBRC 103807 / OttBd1)).